The following is a 471-amino-acid chain: Arginine biosynthesis bifunctional protein ArgJ, mitochondrial (471 aa).

Substrate is bound by residues Thr-201, Lys-230, Thr-241, Glu-328, Asn-466, and Thr-471. Thr-241 functions as the Nucleophile in the catalytic mechanism.

This sequence belongs to the ArgJ family. In terms of assembly, heterodimer of an alpha and a beta chain. Post-translationally, the alpha and beta chains are autoproteolytically processed from a single precursor protein within the mitochondrion.

The protein localises to the mitochondrion matrix. It carries out the reaction N(2)-acetyl-L-ornithine + L-glutamate = N-acetyl-L-glutamate + L-ornithine. The catalysed reaction is L-glutamate + acetyl-CoA = N-acetyl-L-glutamate + CoA + H(+). It participates in amino-acid biosynthesis; L-arginine biosynthesis; L-ornithine and N-acetyl-L-glutamate from L-glutamate and N(2)-acetyl-L-ornithine (cyclic): step 1/1. Its pathway is amino-acid biosynthesis; L-arginine biosynthesis; N(2)-acetyl-L-ornithine from L-glutamate: step 1/4. Catalyzes two activities which are involved in the cyclic version of arginine biosynthesis: the synthesis of acetylglutamate from glutamate and acetyl-CoA, and of ornithine by transacetylation between acetylornithine and glutamate. The polypeptide is Arginine biosynthesis bifunctional protein ArgJ, mitochondrial (Ajellomyces capsulatus (strain NAm1 / WU24) (Darling's disease fungus)).